Here is an 828-residue protein sequence, read N- to C-terminus: Periplasmic nitrate reductase (828 aa).

A signal peptide (tat-type signal) is located at residues 1 to 32 (MNLSRRDFMKANAAMAAATAAGLSIPVKNVEA). The 57-residue stretch at 37-93 (IKWDKAVCRFCGTGCAVLVGTKDGRVVASQGDPDAEVNRGLNCIKGYFLPKIMYGKD) folds into the 4Fe-4S Mo/W bis-MGD-type domain. [4Fe-4S] cluster contacts are provided by Cys44, Cys47, Cys51, and Cys79. Mo-bis(molybdopterin guanine dinucleotide) contacts are provided by residues Lys81, Gln148, Asn173, Cys177, 210 to 217 (WGSNMAEM), 241 to 245 (STFEH), Met371, Gln375, Asn481, 507 to 508 (SD), Lys530, Asp557, and 717 to 726 (TGRVLEHWHT). Phe793 lines the substrate pocket. Asn801 and Lys818 together coordinate Mo-bis(molybdopterin guanine dinucleotide).

This sequence belongs to the prokaryotic molybdopterin-containing oxidoreductase family. NasA/NapA/NarB subfamily. In terms of assembly, component of the periplasmic nitrate reductase NapAB complex composed of NapA and NapB. [4Fe-4S] cluster serves as cofactor. The cofactor is Mo-bis(molybdopterin guanine dinucleotide). Post-translationally, predicted to be exported by the Tat system. The position of the signal peptide cleavage has not been experimentally proven.

Its subcellular location is the periplasm. The enzyme catalyses 2 Fe(II)-[cytochrome] + nitrate + 2 H(+) = 2 Fe(III)-[cytochrome] + nitrite + H2O. In terms of biological role, catalytic subunit of the periplasmic nitrate reductase complex NapAB. Receives electrons from NapB and catalyzes the reduction of nitrate to nitrite. This is Periplasmic nitrate reductase from Aggregatibacter actinomycetemcomitans (Actinobacillus actinomycetemcomitans).